Consider the following 874-residue polypeptide: Coatomer subunit gamma-1 (874 aa).

Over residues 1-11 (MLKKFDKKDEE) the composition is skewed to basic and acidic residues. Residues 1 to 21 (MLKKFDKKDEESGGGSNPLQH) are disordered. HEAT repeat units follow at residues 64 to 101 (TEAT…IAED), 283 to 320 (KELA…KHPS), 322 to 355 (VTAC…GSES), and 356 to 392 (SIDR…KYPR). Thr-594 is modified (phosphothreonine). An interaction with ZNF289/ARFGAP2 region spans residues 609–874 (RQEIFQEQLA…PVDIILASVG (266 aa)).

Belongs to the COPG family. In terms of assembly, oligomeric complex that consists of at least the alpha, beta, beta', gamma, delta, epsilon and zeta subunits. Interacts with ZNF289/ARFGAP2 through its C-terminal appendage domain. Interacts with EGFR upon EGF treatment; interaction is essential for regulation of EGF-dependent nuclear transport of EGFR by retrograde trafficking from the Golgi to the ER. The coatomer interacts with KDEL receptors; the interaction is important for retrograde trafficking of KDEL-bearing proteins from the Golgi to the endoplasmic reticulum. Interacts with COPB1. Interacts with TMED10 (via C-terminus). Interacts with TMED2, TMED3, TMED7 and TMED9.

The protein localises to the cytoplasm. Its subcellular location is the cytosol. The protein resides in the golgi apparatus membrane. It is found in the cytoplasmic vesicle. It localises to the COPI-coated vesicle membrane. Functionally, the coatomer is a cytosolic protein complex that binds to dilysine motifs and reversibly associates with Golgi non-clathrin-coated vesicles, which further mediate biosynthetic protein transport from the ER, via the Golgi up to the trans Golgi network. Coatomer complex is required for budding from Golgi membranes, and is essential for the retrograde Golgi-to-ER transport of dilysine-tagged proteins. In mammals, the coatomer can only be recruited by membranes associated to ADP-ribosylation factors (ARFs), which are small GTP-binding proteins; the complex also influences the Golgi structural integrity, as well as the processing, activity, and endocytic recycling of LDL receptors. Required for limiting lipid storage in lipid droplets. Involved in lipid homeostasis by regulating the presence of perilipin family members PLIN2 and PLIN3 at the lipid droplet surface and promoting the association of adipocyte triglyceride lipase (PNPLA2) with the lipid droplet surface to mediate lipolysis. This is Coatomer subunit gamma-1 (Copg1) from Rattus norvegicus (Rat).